The primary structure comprises 254 residues: Proteasome subunit alpha (254 aa).

Residues 232–254 (PEVDSSESSNEAEAGAEKGSGES) form a disordered region.

This sequence belongs to the peptidase T1A family. As to quaternary structure, the 20S proteasome core is composed of 14 alpha and 14 beta subunits that assemble into four stacked heptameric rings, resulting in a barrel-shaped structure. The two inner rings, each composed of seven catalytic beta subunits, are sandwiched by two outer rings, each composed of seven alpha subunits. The catalytic chamber with the active sites is on the inside of the barrel. Has a gated structure, the ends of the cylinder being occluded by the N-termini of the alpha-subunits. Is capped by the proteasome-associated ATPase, ARC.

It localises to the cytoplasm. It functions in the pathway protein degradation; proteasomal Pup-dependent pathway. With respect to regulation, the formation of the proteasomal ATPase ARC-20S proteasome complex, likely via the docking of the C-termini of ARC into the intersubunit pockets in the alpha-rings, may trigger opening of the gate for substrate entry. Interconversion between the open-gate and close-gate conformations leads to a dynamic regulation of the 20S proteasome proteolysis activity. In terms of biological role, component of the proteasome core, a large protease complex with broad specificity involved in protein degradation. This Mycolicibacterium vanbaalenii (strain DSM 7251 / JCM 13017 / BCRC 16820 / KCTC 9966 / NRRL B-24157 / PYR-1) (Mycobacterium vanbaalenii) protein is Proteasome subunit alpha.